A 150-amino-acid polypeptide reads, in one-letter code: HTH-type transcriptional regulator LrpA (150 aa).

The HTH asnC-type domain maps to 5-66 (LDDIDRILVR…RINPEAVGHL (62 aa)). Residues 24–43 (LSELATRAGLSVSAVQSRVR) constitute a DNA-binding region (H-T-H motif). Residues valine 100, glycine 102, and glutamate 104 each contribute to the L-phenylalanine site.

In terms of assembly, homohexadecamer in the absence of any added ligand. Homooctamer. Tetramer of dimers. In the presence of phenylalanine, the hexadecamer dissociates into an octamer, which further dissociates partially into lower-order oligomers.

With respect to regulation, the DNA-binding activity of LrpA is modulated by interaction of LrpA with various effector molecules, including amino acids and vitamins. The DNA binding affinity is decreased by several amino acids, including phenylalanine, tyrosine, tryptophan, histidine, leucine and aspartate. Preferentially binds to aromatic amino acids. Besides amino acids, the binding affinity is also reduced by vitamins, including B1, B3, B6, VC, B7, B9, B12, VA and VK3. Functionally, transcriptional regulator that probably plays an important role in M.tuberculosis persistence. Regulates the expression of several genes, including lat, rsmG, whiB2, lsr2 and Rv2011c. Acts by binding directly to the promoter region of the target genes. The polypeptide is HTH-type transcriptional regulator LrpA (Mycobacterium tuberculosis (strain ATCC 25618 / H37Rv)).